A 145-amino-acid polypeptide reads, in one-letter code: Large ribosomal subunit protein bL17 (145 aa).

It belongs to the bacterial ribosomal protein bL17 family. In terms of assembly, part of the 50S ribosomal subunit. Contacts protein L32.

The protein is Large ribosomal subunit protein bL17 of Orientia tsutsugamushi (strain Ikeda) (Rickettsia tsutsugamushi).